The sequence spans 142 residues: HTH-type transcriptional regulator MntR (142 aa).

Residues 1–63 form the HTH dtxR-type domain; that stretch reads MPTPSMEDYI…YEKYRGLVLT (63 aa). The Mn(2+) site is built by aspartate 8, glutamate 11, histidine 77, glutamate 99, glutamate 102, and histidine 103.

The protein belongs to the DtxR/MntR family. As to quaternary structure, homodimer.

Its subcellular location is the cytoplasm. DNA binding is strongly activated by Mn(2+). Central regulator of manganese homeostasis. The polypeptide is HTH-type transcriptional regulator MntR (Bacillus cytotoxicus (strain DSM 22905 / CIP 110041 / 391-98 / NVH 391-98)).